Reading from the N-terminus, the 262-residue chain is Tryptophan synthase alpha chain (262 aa).

Residues Glu-49 and Asp-60 each act as proton acceptor in the active site.

The protein belongs to the TrpA family. As to quaternary structure, tetramer of two alpha and two beta chains.

The enzyme catalyses (1S,2R)-1-C-(indol-3-yl)glycerol 3-phosphate + L-serine = D-glyceraldehyde 3-phosphate + L-tryptophan + H2O. The protein operates within amino-acid biosynthesis; L-tryptophan biosynthesis; L-tryptophan from chorismate: step 5/5. In terms of biological role, the alpha subunit is responsible for the aldol cleavage of indoleglycerol phosphate to indole and glyceraldehyde 3-phosphate. This Thermoanaerobacter sp. (strain X514) protein is Tryptophan synthase alpha chain.